We begin with the raw amino-acid sequence, 131 residues long: UPF0102 protein YraN (131 aa).

Belongs to the UPF0102 family.

The protein is UPF0102 protein YraN of Salmonella agona (strain SL483).